Here is a 237-residue protein sequence, read N- to C-terminus: Putative biotin ligase (237 aa).

Positions methionine 1–isoleucine 191 constitute a BPL/LPL catalytic domain.

The protein belongs to the biotin--protein ligase family.

The catalysed reaction is biotin + L-lysyl-[protein] + ATP = N(6)-biotinyl-L-lysyl-[protein] + AMP + diphosphate + H(+). This is Putative biotin ligase from Methanocaldococcus jannaschii (strain ATCC 43067 / DSM 2661 / JAL-1 / JCM 10045 / NBRC 100440) (Methanococcus jannaschii).